A 428-amino-acid chain; its full sequence is MSVSVVLGSQWGDEGKGKLVDILAGDIDVCARCAGGNNAGHTIVVPIDGVEKSFAFHLLPSGLVNPKCTGLLGNGVVIHLPSFFAELDALESQGLDCTNRLFISDRAQLVFDFHQIVDGLKEVELGGSSIGTTKKGIGPAYSGKASRSGLRVHHLFEPETFAAKFRKVVEGRFKRYGHFEYDTEGEIERYRKLAERLRPYVVDSVAFIHKALASGKRVLVEGANALMLDIDFGTYPFVTSSSTSIGGVCTGLGIPPKMVGKTIGVVKAYTTRVGAGPFPTEQLNDVGVHLQEVGHEYGTTTGRRRRCGWLDLAVMKHSCLINGYDAFNLTKLDVLDGLDEIKVGVSYSLDGKELSSFPADLELLSRVEVNYVTLPGWKTPITEIRNYDDLPANCKKYINFIEEQLKVPIEWIGVGPGRDAMITKRKDQ.

GTP is bound by residues 12–18 and 40–42; these read GDEGKGK and GHT. Asp13 functions as the Proton acceptor in the catalytic mechanism. Residues Asp13 and Gly40 each coordinate Mg(2+). IMP is bound by residues 13-16, 38-41, Thr133, Arg147, Asn224, Thr239, and Arg303; these read DEGK and NAGH. Catalysis depends on His41, which acts as the Proton donor. 299-305 provides a ligand contact to substrate; sequence TTTGRRR. Residues Arg305, 331-333, and 413-415 each bind GTP; these read KLD and GVG.

Belongs to the adenylosuccinate synthetase family. As to quaternary structure, homodimer. It depends on Mg(2+) as a cofactor.

It localises to the cytoplasm. It carries out the reaction IMP + L-aspartate + GTP = N(6)-(1,2-dicarboxyethyl)-AMP + GDP + phosphate + 2 H(+). Its pathway is purine metabolism; AMP biosynthesis via de novo pathway; AMP from IMP: step 1/2. Functionally, plays an important role in the de novo pathway and in the salvage pathway of purine nucleotide biosynthesis. Catalyzes the first committed step in the biosynthesis of AMP from IMP. This chain is Adenylosuccinate synthetase, found in Coprinopsis cinerea (strain Okayama-7 / 130 / ATCC MYA-4618 / FGSC 9003) (Inky cap fungus).